The sequence spans 419 residues: Testin (419 aa).

A PET domain is found at 92 to 199 (MILTNPVAAK…GDVKLPSEMN (108 aa)). Disordered stretches follow at residues 133–164 (EKQP…PSKC) and 199–222 (NAQG…GSKD). Residues 155–164 (PAHDQDPSKC) are compositionally biased toward basic and acidic residues. LIM zinc-binding domains lie at 232 to 295 (YSCY…CDSE), 297 to 357 (PRCA…NHAV), and 360 to 419 (QGCH…KMMS).

The protein belongs to the prickle / espinas / testin family. As to quaternary structure, interacts via LIM domain 1 with ZYX. Interacts (via LIM domain 3) with ENAH and VASP. Interacts with ALKBH4, talin, actin, alpha-actinin, GRIP1 and PXN. Interacts (via LIM domain 2) with ACTL7A (via N-terminus). Heterodimer with ACTL7A; the heterodimer interacts with ENAH to form a heterotrimer.

Its subcellular location is the cytoplasm. The protein resides in the cell junction. It localises to the focal adhesion. Its function is as follows. Scaffold protein that may play a role in cell adhesion, cell spreading and in the reorganization of the actin cytoskeleton. Plays a role in the regulation of cell proliferation. May act as a tumor suppressor. The sequence is that of Testin (Tes) from Rattus norvegicus (Rat).